Consider the following 394-residue polypeptide: Protein TsgA homolog (394 aa).

The next 12 membrane-spanning stretches (helical) occupy residues 11–31 (WISYFSYALTGALVIVTGMVM), 51–71 (FLNAGILISIFLNAWLMEIIP), 76–96 (LMFGFVLMVLAIAGLMLGKSL), 101–121 (LCMFILGVVSGITMSIGTFLI), 134–154 (LLFTDSFFSMAGMIFPIVAAM), 162–182 (WYWVYACIGLLYVGIFVLTLF), 206–226 (IGVLFLSIAALCYILGQLGFI), 251–271 (FWTSYMIGMWVFSFILRFFDL), 274–294 (IVTILAALATGAMYLFVSTDN), 302–322 (IMALGFVSSAIYTTLITLGSL), 334–354 (FILTCGTIGTMLTFVVTGPIV), and 363–383 (LTTANGLYLAVFVMCLLLGFV).

This sequence belongs to the major facilitator superfamily. TsgA family.

Its subcellular location is the cell inner membrane. This Serratia proteamaculans (strain 568) protein is Protein TsgA homolog.